The chain runs to 239 residues: THAP domain-containing protein 3 (239 aa).

Residues 1 to 82 (MPKSCAARQC…LKHNAVPTVF (82 aa)) form a THAP-type zinc finger. Residues 84-177 (FQDPTQQVRE…RRTPNKQPSD (94 aa)) are disordered. A Phosphoserine modification is found at Ser122. The HCFC1-binding motif (HBM) signature appears at 177 to 180 (DHSY).

As to quaternary structure, component of a THAP1/THAP3-HCFC1-OGT complex that contains at least, either THAP1 or THAP3, HCFC1 and OGT. Interacts directly with OGT and HCFC1 (via its HBM). As to expression, highly expressed in heart, skeletal muscle and placenta. Weaker expression in brain, kidney and liver.

Component of a THAP1/THAP3-HCFC1-OGT complex that is required for the regulation of the transcriptional activity of RRM1. This Homo sapiens (Human) protein is THAP domain-containing protein 3 (THAP3).